The sequence spans 301 residues: Porin (301 aa).

As to quaternary structure, homotrimer.

It is found in the cell outer membrane. Forms channels that allow the passive diffusion of small hydrophilic solutes up to an exclusion limit of about 0.6 kDa. The polypeptide is Porin (Rhodobacter capsulatus (Rhodopseudomonas capsulata)).